Consider the following 320-residue polypeptide: Ferrochelatase (320 aa).

Residues His194 and Glu275 each contribute to the Fe cation site.

The protein belongs to the ferrochelatase family. As to quaternary structure, monomer.

It localises to the cytoplasm. It carries out the reaction heme b + 2 H(+) = protoporphyrin IX + Fe(2+). The protein operates within porphyrin-containing compound metabolism; protoheme biosynthesis; protoheme from protoporphyrin-IX: step 1/1. Functionally, catalyzes the ferrous insertion into protoporphyrin IX. The polypeptide is Ferrochelatase (Escherichia coli O8 (strain IAI1)).